A 484-amino-acid chain; its full sequence is Poly(A) RNA polymerase GLD2 (484 aa).

A phosphoserine mark is found at serine 62 and serine 69. A Nuclear localization signal motif is present at residues 76 to 92; the sequence is KRISDEKAFPLDGKRQR. Residue serine 95 is modified to Phosphoserine. Positions 213 and 215 each coordinate Mg(2+). The region spanning 386–440 is the PAP-associated domain; sequence SLGDLLLGFLKYYATEFDWNTQMISVREAKAIPRPDDMEWRNKYICVEEPFDGTN.

Belongs to the DNA polymerase type-B-like family. GLD2 subfamily. In terms of assembly, interacts with CPEB1, CPEB2, CPSF1 and PABPC1. Interacts with QKI isoform QKI7; promoting recruitment to miRNA miR-122 and miR-122 stabilization. Mg(2+) serves as cofactor. Requires Mn(2+) as cofactor. In terms of tissue distribution, ubiquitous. In brain, it is highly expressed in the cerebral cortex, cerebellum, hippocampus and olfactory bulb.

Its subcellular location is the cytoplasm. The protein localises to the nucleus. The enzyme catalyses RNA(n) + ATP = RNA(n)-3'-adenine ribonucleotide + diphosphate. In terms of biological role, cytoplasmic poly(A) RNA polymerase that adds successive AMP monomers to the 3'-end of specific RNAs, forming a poly(A) tail. In contrast to the canonical nuclear poly(A) RNA polymerase, it only adds poly(A) to selected cytoplasmic mRNAs. Does not play a role in replication-dependent histone mRNA degradation. Adds a single nucleotide to the 3' end of specific miRNAs, monoadenylation stabilizes and prolongs the activity of some but not all miRNAs. The chain is Poly(A) RNA polymerase GLD2 (Tent2) from Mus musculus (Mouse).